The chain runs to 774 residues: Alpha,alpha-trehalose phosphorylase (774 aa).

Substrate is bound at residue 369-370; it reads WD. Catalysis depends on E498, which acts as the Proton donor. 610–611 contributes to the substrate binding site; the sequence is KQ.

It belongs to the glycosyl hydrolase 65 family. As to quaternary structure, homodimer.

It carries out the reaction alpha,alpha-trehalose + phosphate = beta-D-glucose 1-phosphate + D-glucose. Its pathway is glycan degradation; trehalose degradation. Inhibited by Cu(2+), Hg(2+), Mg(2+), Mn(2+), Pb(2+) and Zn(2+). Functionally, catalyzes the reversible phosphorolytic cleavage of trehalose. Phosphorolysis is specific for trehalose, but D-xylose, D-galactose, L-arabinose, D-fucose, L-fucose, D-glucosamine and 2-deoxy D-glucose can act as substitutes for D-glucose in the synthetic reaction. The sequence is that of Alpha,alpha-trehalose phosphorylase (treP) from Thermoanaerobacter brockii (Thermoanaerobium brockii).